Reading from the N-terminus, the 227-residue chain is Urease accessory protein UreF 2 (227 aa).

This sequence belongs to the UreF family. In terms of assembly, ureD, UreF and UreG form a complex that acts as a GTP-hydrolysis-dependent molecular chaperone, activating the urease apoprotein by helping to assemble the nickel containing metallocenter of UreC. The UreE protein probably delivers the nickel.

The protein localises to the cytoplasm. Required for maturation of urease via the functional incorporation of the urease nickel metallocenter. This chain is Urease accessory protein UreF 2, found in Brucella anthropi (strain ATCC 49188 / DSM 6882 / CCUG 24695 / JCM 21032 / LMG 3331 / NBRC 15819 / NCTC 12168 / Alc 37) (Ochrobactrum anthropi).